The following is a 78-amino-acid chain: Putative DPH3 homolog B (78 aa).

The DPH-type MB domain maps to 4 to 60 (FHDEVEIEDFQYDEDSETYFCPCPCGDNFSITKEELENGEGVAMCPGCSLIIKVIYD). Zn(2+) is bound by residues C26, C28, C48, and C51.

This sequence belongs to the DPH3 family.

The protein is Putative DPH3 homolog B (DPH3P1) of Homo sapiens (Human).